The chain runs to 414 residues: Cytochrome c-554 (414 aa).

A signal peptide spans 1 to 24; sequence MQSSRPSDRQLAIVVSVAVGIVVA. 15 residues coordinate heme: Met110, Cys131, Cys134, His135, Met154, Cys179, Cys182, His183, Met283, Cys294, Cys297, His298, Cys378, Cys381, and His382.

In terms of processing, binds 4 heme groups per subunit. Post-translationally, the N-terminus is blocked.

It is found in the periplasm. In terms of biological role, serves as the immediate electron donor to the oxidized BChl2 (bacteriochlorophyll dimer) that is oxidized in the first step of light-induced charge separation. Can also oxidize low-potential substrates. The sequence is that of Cytochrome c-554 (puf2C) from Chloroflexus aurantiacus (strain ATCC 29366 / DSM 635 / J-10-fl).